The primary structure comprises 135 residues: Large ribosomal subunit protein uL16c (135 aa).

This sequence belongs to the universal ribosomal protein uL16 family. In terms of assembly, part of the 50S ribosomal subunit.

It is found in the plastid. This Epifagus virginiana (Beechdrops) protein is Large ribosomal subunit protein uL16c.